Here is a 336-residue protein sequence, read N- to C-terminus: tRNA N6-adenosine threonylcarbamoyltransferase (336 aa).

Positions 110 and 114 each coordinate Fe cation. Substrate contacts are provided by residues 133-137, Asp166, Gly179, and Asn271; that span reads LVSGK. Position 300 (Asp300) interacts with Fe cation.

It belongs to the KAE1 / TsaD family. Requires Fe(2+) as cofactor.

The protein localises to the cytoplasm. The catalysed reaction is L-threonylcarbamoyladenylate + adenosine(37) in tRNA = N(6)-L-threonylcarbamoyladenosine(37) in tRNA + AMP + H(+). In terms of biological role, required for the formation of a threonylcarbamoyl group on adenosine at position 37 (t(6)A37) in tRNAs that read codons beginning with adenine. Is involved in the transfer of the threonylcarbamoyl moiety of threonylcarbamoyl-AMP (TC-AMP) to the N6 group of A37, together with TsaE and TsaB. TsaD likely plays a direct catalytic role in this reaction. The protein is tRNA N6-adenosine threonylcarbamoyltransferase of Buchnera aphidicola subsp. Acyrthosiphon pisum (strain 5A).